A 336-amino-acid polypeptide reads, in one-letter code: Isopentenyl-diphosphate delta-isomerase (336 aa).

Residue 5–6 participates in substrate binding; the sequence is RK. FMN contacts are provided by residues 60–62, serine 90, and asparagine 117; that span reads AMT. Position 147 (glutamine 147) interacts with substrate. Glutamate 148 lines the Mg(2+) pocket. Residues lysine 179, serine 204, threonine 209, 253 to 255, and 274 to 275 contribute to the FMN site; these read GVR and SR.

This sequence belongs to the IPP isomerase type 2 family. In terms of assembly, homooctamer. Dimer of tetramers. Requires FMN as cofactor. NADPH is required as a cofactor. The cofactor is Mg(2+).

It localises to the cytoplasm. The catalysed reaction is isopentenyl diphosphate = dimethylallyl diphosphate. In terms of biological role, involved in the biosynthesis of isoprenoids. Catalyzes the 1,3-allylic rearrangement of the homoallylic substrate isopentenyl (IPP) to its allylic isomer, dimethylallyl diphosphate (DMAPP). The protein is Isopentenyl-diphosphate delta-isomerase of Streptococcus pneumoniae (strain 70585).